The primary structure comprises 528 residues: UDP-glucuronosyltransferase 2B19 (528 aa).

The signal sequence occupies residues 1–21 (MSMKWTSALLLIQLSCYLSFG). The residue at position 135 (Lys135) is an N6-succinyllysine. An N-linked (GlcNAc...) asparagine glycan is attached at Asn315. Residues 493 to 513 (VIGFLLACVATVIFIITKCLF) traverse the membrane as a helical segment.

Belongs to the UDP-glycosyltransferase family. Expressed in liver, ovary, prostate, colon, kidney, pancreas, brain, cerebellum, mammary gland and epididymis. Not expressed in small intestine, spleen, bladder, adrenal gland and testis.

The protein localises to the microsome membrane. It localises to the endoplasmic reticulum membrane. The enzyme catalyses glucuronate acceptor + UDP-alpha-D-glucuronate = acceptor beta-D-glucuronoside + UDP + H(+). Functionally, UDPGT is of major importance in the conjugation and subsequent elimination of potentially toxic xenobiotics and endogenous compounds. This isozyme displays activity toward several classes of xenobiotic substrates: eugenol, 4-methyllumbelliferone, p-nitrophenol, 1-naphthol, p,p'-biphenol, naringenin and o,o'-biphenol. Active also on 3a-hydroxy and 17b-hydroxy positions of steroids. Contributes to the formation of androgen glucuronide in extrahepatic steroid target tissues such as the prostate. This Macaca fascicularis (Crab-eating macaque) protein is UDP-glucuronosyltransferase 2B19 (UGT2B19).